The primary structure comprises 486 residues: MKIPASSPQDTTNNNNNTNSTDSNHLSMDEHVMRSMDWDSIMKELELDDDSAPNSLKTGFTTTTTDSTILPLYAVDSNLPGFPDQIQPSDFESSSDVYPGQNQTTGYGFNSLDSVDNGGFDFIEDLIRVVDCVESDELQLAQVVLSRLNQRLRSPAGRPLQRAAFYFKEALGSFLTGSNRNPIRLSSWSEIVQRIRAIKEYSGISPIPLFSHFTANQAILDSLSSQSSSPFVHVVDFEIGFGGQYASLMREITEKSVSGGFLRVTAVVAEECAVETRLVKENLTQFAAEMKIRFQIEFVLMKTFEMLSFKAIRFVEGERTVVLISPAIFRRLSGITDFVNNLRRVSPKVVVFVDSEGWTEIAGSGSFRREFVSALEFYTMVLESLDAAAPPGDLVKKIVEAFVLRPKISAAVETAADRRHTGEMTWREAFCAAGMRPIQLSQFADFQAECLLEKAQVRGFHVAKRQGELVLCWHGRALVATSAWRF.

A disordered region spans residues 1 to 28 (MKIPASSPQDTTNNNNNTNSTDSNHLSM). Residues 10–24 (DTTNNNNNTNSTDSN) show a composition bias toward low complexity. Residues 113-485 (DSVDNGGFDF…RALVATSAWR (373 aa)) form the GRAS domain. Residues 120–179 (FDFIEDLIRVVDCVESDELQLAQVVLSRLNQRLRSPAGRPLQRAAFYFKEALGSFLTGSN) form a leucine repeat I (LRI) region. A VHIID region spans residues 198-266 (IKEYSGISPI…VSGGFLRVTA (69 aa)). The VHIID motif lies at 232–236 (VHVVD). The tract at residues 278-310 (LVKENLTQFAAEMKIRFQIEFVLMKTFEMLSFK) is leucine repeat II (LRII). Residues 320–410 (TVVLISPAIF…AFVLRPKISA (91 aa)) form a PFYRE region. The tract at residues 413–485 (ETAADRRHTG…RALVATSAWR (73 aa)) is SAW.

It belongs to the GRAS family. In terms of tissue distribution, expressed in seedlings, roots, leaves and flowers.

It is found in the nucleus. Probable transcription factor involved in plant development. In Arabidopsis thaliana (Mouse-ear cress), this protein is Scarecrow-like protein 15 (SCL15).